Here is a 245-residue protein sequence, read N- to C-terminus: 1-(5-phosphoribosyl)-5-[(5-phosphoribosylamino)methylideneamino] imidazole-4-carboxamide isomerase (245 aa).

Residue Asp-7 is the Proton acceptor of the active site. Residue Asp-129 is the Proton donor of the active site.

The protein belongs to the HisA/HisF family.

The protein localises to the cytoplasm. It carries out the reaction 1-(5-phospho-beta-D-ribosyl)-5-[(5-phospho-beta-D-ribosylamino)methylideneamino]imidazole-4-carboxamide = 5-[(5-phospho-1-deoxy-D-ribulos-1-ylimino)methylamino]-1-(5-phospho-beta-D-ribosyl)imidazole-4-carboxamide. The protein operates within amino-acid biosynthesis; L-histidine biosynthesis; L-histidine from 5-phospho-alpha-D-ribose 1-diphosphate: step 4/9. The protein is 1-(5-phosphoribosyl)-5-[(5-phosphoribosylamino)methylideneamino] imidazole-4-carboxamide isomerase of Vibrio campbellii (strain ATCC BAA-1116).